The primary structure comprises 685 residues: Pentatricopeptide repeat-containing protein At5g19020, mitochondrial (685 aa).

A mitochondrion-targeting transit peptide spans 1–23; that stretch reads MIKLIRFFRSRRCWVISLQARCF. PPR repeat units lie at residues 40–74, 75–105, 106–136, 137–171, 172–206, 207–237, 238–268, 269–303, 304–338, 339–369, 370–400, 401–435, 437–471, 472–502, 506–540, 541–576, and 577–607; these read TERA…GLDS, NGYI…HAKL, DSAS…MPER, SCVS…GIML, NEVT…KLEG, RVFV…MPER, NLVT…ITEK, DIVS…GMKP, SEVM…GFDC, YDFL…SVKD, HIAS…THDK, DIFS…SQVK, DAIT…TIPP, NDNL…TKNI, TISP…PIKP, NSIT…GIEP, and DIKH…MPVK. The tract at residues 612–685 is type E motif; degenerate; it reads IWGMLLSASR…EWSRAFSGVV (74 aa).

The protein belongs to the PPR family. PCMP-E subfamily.

It localises to the mitochondrion. In Arabidopsis thaliana (Mouse-ear cress), this protein is Pentatricopeptide repeat-containing protein At5g19020, mitochondrial (PCMP-E42).